The following is a 343-amino-acid chain: Aldehyde reductase 2 (343 aa).

Residue Tyr-177 coordinates NADP(+).

It belongs to the NAD(P)-dependent epimerase/dehydratase family. Dihydroflavonol-4-reductase subfamily. In terms of assembly, monomer.

It catalyses the reaction a primary alcohol + NADP(+) = an aldehyde + NADPH + H(+). With respect to regulation, inhibited by quercetin and diphenylhydantoin. Its function is as follows. Catalyzes the asymmetric reduction of o-substituted aliphatic and aromatic aldehydes and ketones to an S-enantiomer. Reduces ethyl 4-chloro-3-oxobutanoate to ethyl (S)-4-chloro-3-hydroxybutanoate. The chain is Aldehyde reductase 2 from Sporidiobolus salmonicolor (Yeast-like fungus).